We begin with the raw amino-acid sequence, 215 residues long: Pyridoxine/pyridoxamine 5'-phosphate oxidase (215 aa).

Substrate is bound by residues 9 to 12 (RKEY) and K67. Residues 62 to 67 (RIVLLK), 77 to 78 (YT), K84, and Q106 each bind FMN. Substrate contacts are provided by Y124, R128, and S132. Residues 141–142 (QS) and W187 contribute to the FMN site. Residue 193–195 (RLH) coordinates substrate. R197 is an FMN binding site.

It belongs to the pyridoxamine 5'-phosphate oxidase family. As to quaternary structure, homodimer. FMN serves as cofactor.

The catalysed reaction is pyridoxamine 5'-phosphate + O2 + H2O = pyridoxal 5'-phosphate + H2O2 + NH4(+). It carries out the reaction pyridoxine 5'-phosphate + O2 = pyridoxal 5'-phosphate + H2O2. Its pathway is cofactor metabolism; pyridoxal 5'-phosphate salvage; pyridoxal 5'-phosphate from pyridoxamine 5'-phosphate: step 1/1. The protein operates within cofactor metabolism; pyridoxal 5'-phosphate salvage; pyridoxal 5'-phosphate from pyridoxine 5'-phosphate: step 1/1. Its function is as follows. Catalyzes the oxidation of either pyridoxine 5'-phosphate (PNP) or pyridoxamine 5'-phosphate (PMP) into pyridoxal 5'-phosphate (PLP). The protein is Pyridoxine/pyridoxamine 5'-phosphate oxidase of Cytophaga hutchinsonii (strain ATCC 33406 / DSM 1761 / CIP 103989 / NBRC 15051 / NCIMB 9469 / D465).